Consider the following 218-residue polypeptide: NADH-ubiquinone oxidoreductase 21 kDa subunit, mitochondrial (218 aa).

A mitochondrion-targeting transit peptide spans 1–33; it reads MSALRITTASAARMLRTSNAMMPSVMGAAQRRA. The tract at residues 31–74 is disordered; it reads RRALSDSAEPARVPSVESARVPEKLAKEDSPLATPKRNSPDYNV. Positions 50–60 are enriched in basic and acidic residues; that stretch reads RVPEKLAKEDS.

This sequence belongs to the complex I NDUFS4 subunit family. Complex I is composed of about 40 different subunits. This is a component of the iron-sulfur (IP) fragment of the enzyme.

It localises to the mitochondrion inner membrane. Its function is as follows. Accessory subunit of the mitochondrial membrane respiratory chain NADH dehydrogenase (Complex I), that is believed not to be involved in catalysis. Complex I functions in the transfer of electrons from NADH to the respiratory chain. The immediate electron acceptor for the enzyme is believed to be ubiquinone. This is NADH-ubiquinone oxidoreductase 21 kDa subunit, mitochondrial (nuo-21) from Neurospora crassa (strain ATCC 24698 / 74-OR23-1A / CBS 708.71 / DSM 1257 / FGSC 987).